Here is a 449-residue protein sequence, read N- to C-terminus: POU domain, class 3, transcription factor 1 (449 aa).

Disordered stretches follow at residues 1 to 22 (MATT…TGPL), 76 to 108 (GGGG…GGGG), 132 to 152 (AHHL…HQPQ), 184 to 251 (GLHH…PSSD), and 393 to 449 (KRMT…GSVQ). Gly residues-rich tracts occupy residues 11–20 (GPGGGAGGTG) and 93–108 (AGGG…GGGG). Positions 132–143 (AHHLGPAMSPSP) are enriched in low complexity. The span at 188–197 (ALHEDGHEAQ) shows a compositional bias: basic and acidic residues. Positions 218-230 (AGGLHAAAAHLHP) are enriched in low complexity. The region spanning 245–319 (EDAPSSDDLE…LLNKWLEETD (75 aa)) is the POU-specific domain. Residues 337–396 (KRKKRTSIEVGVKGALESHFLKCPKPSAHEITGLADSLQLEKEVVRVWFCNRRQKEKRMT) constitute a DNA-binding region (homeobox). A compositionally biased stretch (pro residues) spans 425–434 (PSAPPPPPPA).

It belongs to the POU transcription factor family. Class-3 subfamily.

Its subcellular location is the nucleus. In terms of biological role, transcription factor that binds to the octamer motif (5'-ATTTGCAT-3'). Acts as a transcriptional activator when binding cooperatively with SOX4, SOX11, or SOX12 to gene promoters. Acts as a transcriptional repressor of myelin-specific genes. The sequence is that of POU domain, class 3, transcription factor 1 (Pou3f1) from Mus musculus (Mouse).